A 275-amino-acid chain; its full sequence is Formamidopyrimidine-DNA glycosylase (275 aa).

P2 acts as the Schiff-base intermediate with DNA in catalysis. E3 serves as the catalytic Proton donor. Residue K58 is the Proton donor; for beta-elimination activity of the active site. Residues H91, R109, and R154 each contribute to the DNA site. The segment at 240–274 adopts an FPG-type zinc-finger fold; sequence AVYERAGLPCRVCGTPIRRLVQGQRATYYCPSCQK. Catalysis depends on R264, which acts as the Proton donor; for delta-elimination activity.

This sequence belongs to the FPG family. As to quaternary structure, monomer. Zn(2+) is required as a cofactor.

The catalysed reaction is Hydrolysis of DNA containing ring-opened 7-methylguanine residues, releasing 2,6-diamino-4-hydroxy-5-(N-methyl)formamidopyrimidine.. The enzyme catalyses 2'-deoxyribonucleotide-(2'-deoxyribose 5'-phosphate)-2'-deoxyribonucleotide-DNA = a 3'-end 2'-deoxyribonucleotide-(2,3-dehydro-2,3-deoxyribose 5'-phosphate)-DNA + a 5'-end 5'-phospho-2'-deoxyribonucleoside-DNA + H(+). Involved in base excision repair of DNA damaged by oxidation or by mutagenic agents. Acts as a DNA glycosylase that recognizes and removes damaged bases. Has a preference for oxidized purines, such as 7,8-dihydro-8-oxoguanine (8-oxoG). Has AP (apurinic/apyrimidinic) lyase activity and introduces nicks in the DNA strand. Cleaves the DNA backbone by beta-delta elimination to generate a single-strand break at the site of the removed base with both 3'- and 5'-phosphates. The polypeptide is Formamidopyrimidine-DNA glycosylase (Bordetella petrii (strain ATCC BAA-461 / DSM 12804 / CCUG 43448)).